We begin with the raw amino-acid sequence, 475 residues long: 3-isopropylmalate dehydratase large subunit (475 aa).

3 residues coordinate [4Fe-4S] cluster: cysteine 352, cysteine 413, and cysteine 416.

The protein belongs to the aconitase/IPM isomerase family. LeuC type 1 subfamily. In terms of assembly, heterodimer of LeuC and LeuD. Requires [4Fe-4S] cluster as cofactor.

It catalyses the reaction (2R,3S)-3-isopropylmalate = (2S)-2-isopropylmalate. Its pathway is amino-acid biosynthesis; L-leucine biosynthesis; L-leucine from 3-methyl-2-oxobutanoate: step 2/4. In terms of biological role, catalyzes the isomerization between 2-isopropylmalate and 3-isopropylmalate, via the formation of 2-isopropylmaleate. This chain is 3-isopropylmalate dehydratase large subunit, found in Pseudomonas syringae pv. tomato (strain ATCC BAA-871 / DC3000).